Here is a 113-residue protein sequence, read N- to C-terminus: Protein FAM27E3 (113 aa).

Positions 1–113 are disordered; the sequence is MGIFQLLRDR…YTHRHTHRVL (113 aa). A compositionally biased stretch (basic and acidic residues) spans 77–99; the sequence is QTDRERERNTQRLRDRERRENGR. Residues 100-113 show a composition bias toward basic residues; that stretch reads HTHTYTHRHTHRVL.

This sequence belongs to the FAM27 family.

In Homo sapiens (Human), this protein is Protein FAM27E3 (FAM27E3).